A 236-amino-acid chain; its full sequence is UPF0173 metal-dependent hydrolase DSY1309 (236 aa).

It belongs to the UPF0173 family.

This Desulfitobacterium hafniense (strain Y51) protein is UPF0173 metal-dependent hydrolase DSY1309.